Here is a 335-residue protein sequence, read N- to C-terminus: Adenosine deaminase (335 aa).

Positions 12 and 14 each coordinate Zn(2+). Substrate-binding residues include histidine 14 and aspartate 16. Histidine 197 contributes to the Zn(2+) binding site. Catalysis depends on glutamate 200, which acts as the Proton donor. A Zn(2+)-binding site is contributed by aspartate 278.

This sequence belongs to the metallo-dependent hydrolases superfamily. Adenosine and AMP deaminases family. Adenosine deaminase subfamily. The cofactor is Zn(2+).

The catalysed reaction is adenosine + H2O + H(+) = inosine + NH4(+). It catalyses the reaction 2'-deoxyadenosine + H2O + H(+) = 2'-deoxyinosine + NH4(+). In terms of biological role, catalyzes the hydrolytic deamination of adenosine and 2-deoxyadenosine. The sequence is that of Adenosine deaminase from Clostridium botulinum (strain Langeland / NCTC 10281 / Type F).